Here is a 1604-residue protein sequence, read N- to C-terminus: E3 ubiquitin-protein ligase HECW1 (1604 aa).

One can recognise a C2 domain in the interval 182 to 318; sequence SAAPIFKGIG…LERHAIGDRV (137 aa). 4 disordered regions span residues 350–539, 572–604, 642–667, and 727–826; these read DEEI…CSLP, PSAQ…LSEV, GIGA…QQGA, and STVF…TIDE. Residues 362–380 are compositionally biased toward polar residues; it reads SAETQDSIMNSMVGNSNGE. Positions 387-396 are enriched in basic and acidic residues; it reads EFCKDAKPES. The segment covering 398-412 has biased composition (polar residues); sequence SEGNGVNSSENQNQE. Composition is skewed to acidic residues over residues 435 to 444 and 458 to 469; these read APEEPGELQD and EVAEGLPLDEDS. Residues 494–505 show a composition bias toward basic and acidic residues; it reads GAREEEMQKGKD. Acidic residues predominate over residues 580–589; sequence TEEEDGLEEE. The span at 590 to 601 shows a compositional bias: basic and acidic residues; the sequence is STLKESSEKDGL. Polar residues-rich tracts occupy residues 654-667, 748-762, and 803-812; these read STGS…QQGA, DSVQ…STNG, and HNSQPISQLP. Residues 826 to 859 enclose the WW 1 domain; sequence EPLPPNWEARIDSHGRVFYVDHINRTTTWQRPSM. Ser-871 is modified (phosphoserine). A coiled-coil region spans residues 871–898; that stretch reads SVHQMEQLNRRYQNIQRTMATERAEEDS. The segment at 890 to 936 is disordered; the sequence is ATERAEEDSGNQNSEQIPDGGGGGGGGSDSEAESSQSSLDLRREGSL. Positions 908–917 are enriched in gly residues; the sequence is DGGGGGGGGS. Ser-935 and Ser-937 each carry phosphoserine. The WW 2 domain maps to 1016–1049; it reads LELPRGWEIKTDHQGKSFFVDHNSRATTFIDPRI. One can recognise an HECT domain in the interval 1269-1604; that stretch reads SRKELQRNKL…VEETSTFGLE (336 aa). Cys-1572 functions as the Glycyl thioester intermediate in the catalytic mechanism.

Interacts with DVL1 and SSR3. As to expression, predominantly expressed in neurons of the spinal cord.

The protein resides in the cytoplasm. It carries out the reaction S-ubiquitinyl-[E2 ubiquitin-conjugating enzyme]-L-cysteine + [acceptor protein]-L-lysine = [E2 ubiquitin-conjugating enzyme]-L-cysteine + N(6)-ubiquitinyl-[acceptor protein]-L-lysine.. It functions in the pathway protein modification; protein ubiquitination. Functionally, E3 ubiquitin-protein ligase that mediates ubiquitination and subsequent degradation of DVL1. This chain is E3 ubiquitin-protein ligase HECW1 (Hecw1), found in Mus musculus (Mouse).